The primary structure comprises 355 residues: UDP-N-acetylglucosamine--N-acetylmuramyl-(pentapeptide) pyrophosphoryl-undecaprenol N-acetylglucosamine transferase (355 aa).

UDP-N-acetyl-alpha-D-glucosamine is bound by residues 7–9 (TGG), Asn-119, Arg-159, Ser-187, Ile-241, and Gln-286.

Belongs to the glycosyltransferase 28 family. MurG subfamily.

The protein resides in the cell inner membrane. It carries out the reaction di-trans,octa-cis-undecaprenyl diphospho-N-acetyl-alpha-D-muramoyl-L-alanyl-D-glutamyl-meso-2,6-diaminopimeloyl-D-alanyl-D-alanine + UDP-N-acetyl-alpha-D-glucosamine = di-trans,octa-cis-undecaprenyl diphospho-[N-acetyl-alpha-D-glucosaminyl-(1-&gt;4)]-N-acetyl-alpha-D-muramoyl-L-alanyl-D-glutamyl-meso-2,6-diaminopimeloyl-D-alanyl-D-alanine + UDP + H(+). It participates in cell wall biogenesis; peptidoglycan biosynthesis. Its function is as follows. Cell wall formation. Catalyzes the transfer of a GlcNAc subunit on undecaprenyl-pyrophosphoryl-MurNAc-pentapeptide (lipid intermediate I) to form undecaprenyl-pyrophosphoryl-MurNAc-(pentapeptide)GlcNAc (lipid intermediate II). The polypeptide is UDP-N-acetylglucosamine--N-acetylmuramyl-(pentapeptide) pyrophosphoryl-undecaprenol N-acetylglucosamine transferase (Nitrosomonas eutropha (strain DSM 101675 / C91 / Nm57)).